The sequence spans 377 residues: Pseudouridylate synthase RPUSD4, mitochondrial (377 aa).

A mitochondrion-targeting transit peptide spans 1–15 (MAAPRWSASGPWIRG). Positions 36–62 (AASTAINAQRLAEKLRAQKREQDTKKE) form a coiled coil. The active site involves Asp-153.

It belongs to the pseudouridine synthase RluA family. Interacts with 16S mt-rRNA, mt-tRNA(Phe) and mt-tRNA(Met). Forms a regulatory protein-RNA complex, consisting of RCC1L, NGRN, RPUSD3, RPUSD4, TRUB2, FASTKD2 and 16S mt-rRNA.

Its subcellular location is the mitochondrion matrix. The protein resides in the nucleus. It is found in the cytoplasm. The catalysed reaction is uridine in 5S rRNA = pseudouridine in 5S rRNA. It carries out the reaction a uridine in tRNA = a pseudouridine in tRNA. It catalyses the reaction a uridine in mRNA = a pseudouridine in mRNA. Functionally, catalyzes uridine to pseudouridine isomerization (pseudouridylation) of different mitochondrial RNA substrates. Acts on position 1397 in 16S mitochondrial ribosomal RNA (16S mt-rRNA). This modification is required for the assembly of 16S mt-rRNA into a functional mitochondrial ribosome. As a component of a functional protein-RNA module, consisting of RCC1L, NGRN, RPUSD3, RPUSD4, TRUB2, FASTKD2 and 16S mt-rRNA, controls 16S mt-rRNA abundance and is required for intra-mitochondrial translation. Acts on position 39 in mitochondrial tRNA(Phe). Also catalyzes pseudouridylation of mRNAs in nucleus: acts as a regulator of pre-mRNA splicing by mediating pseudouridylation of pre-mRNAs at locations associated with alternatively spliced regions. Pseudouridylation of pre-mRNAs near splice sites directly regulates mRNA splicing and mRNA 3'-end processing. This is Pseudouridylate synthase RPUSD4, mitochondrial from Homo sapiens (Human).